The following is a 91-amino-acid chain: Small ribosomal subunit protein uS15 (91 aa).

It belongs to the universal ribosomal protein uS15 family. In terms of assembly, part of the 30S ribosomal subunit. Forms a bridge to the 50S subunit in the 70S ribosome, contacting the 23S rRNA.

Functionally, one of the primary rRNA binding proteins, it binds directly to 16S rRNA where it helps nucleate assembly of the platform of the 30S subunit by binding and bridging several RNA helices of the 16S rRNA. Its function is as follows. Forms an intersubunit bridge (bridge B4) with the 23S rRNA of the 50S subunit in the ribosome. The chain is Small ribosomal subunit protein uS15 from Legionella pneumophila (strain Paris).